Consider the following 83-residue polypeptide: UPF0270 protein CGSHiEE_07180 (83 aa).

Belongs to the UPF0270 family.

The sequence is that of UPF0270 protein CGSHiEE_07180 from Haemophilus influenzae (strain PittEE).